A 343-amino-acid chain; its full sequence is MKALAKLERAPGLTLTDVKKPEVGHNDVMIRITRTAICGTDIHIWKWDDWAQKTIPVPMHVGHEYVGEIVEMGQEVRGFAIGDRVSGEGHITCGFCRNCRAGRRHLCRNTVGVGVNREGAFAEYLVIPAFNAFKIPPEISDDLAAIFDPFGNATHTALSFNLVGEDVLITGAGPIGIMAVAIAKHVGARNVVITDVNDYRLELARKMGATRAVNVSRESLRDVMADLHMAEGFDVGLEMSGVPSAFTGMLEAMNHGGKIALLGIPPAQTAIDWTQVIFKGLEIKGIYGREMFETWYKMVAMLQSGLDLSPILTHHFKVDDYREAFATMLSGESGKVILDWTAA.

Cys38 contributes to the Zn(2+) binding site. Residues Thr40 and His43 each act as charge relay system in the active site. The Zn(2+) site is built by His63, Glu64, Cys93, Cys96, Cys99, and Cys107. NAD(+)-binding positions include Ile175, Asp195, Arg200, 262–264 (LGI), and 286–287 (IY).

This sequence belongs to the zinc-containing alcohol dehydrogenase family. As to quaternary structure, homotetramer. Zn(2+) is required as a cofactor.

It localises to the cytoplasm. The enzyme catalyses L-threonine + NAD(+) = (2S)-2-amino-3-oxobutanoate + NADH + H(+). It functions in the pathway amino-acid degradation; L-threonine degradation via oxydo-reductase pathway; glycine from L-threonine: step 1/2. Catalyzes the NAD(+)-dependent oxidation of L-threonine to 2-amino-3-ketobutyrate. The sequence is that of L-threonine 3-dehydrogenase from Paraburkholderia xenovorans (strain LB400).